Reading from the N-terminus, the 348-residue chain is MIDNNCLYKEELNRNSYSGLAKEASESILLPSESGFDGSRSPVCSSPDPNLNYRPVIGILSHPGDGASGRLTNDTSSTYIAASYVKFAEAGGARVIPLIYNEPEEVLFQKLELVNGVIFTGGWAKKYDYFEIVKKIFTKALERNDAGEHFPVYGICLGFELMSIIISQNRDILERFDAEDNASSLQFVDNVNNDGTLFQRFPPELLKKLSTDCLVMQKHKYGITPANFQANPALSSFFEILTTCIDENSKTYVSTVKAKRYPITGFQWHPEKNAFEWGSSAIPHSEDAIQVTQHAASYLVSEARKSLNRPESQKVLSNLIYNYKPTYCGYAGRGYDEVYIFTQPRSRF.

Positions 1–23 (MIDNNCLYKEELNRNSYSGLAKE) are cleaved as a signal peptide. Residues 46–342 (SPDPNLNYRP…RGYDEVYIFT (297 aa)) form the Gamma-glutamyl hydrolase domain. Cys156 serves as the catalytic Nucleophile. The active site involves His269.

Belongs to the peptidase C26 family. In terms of tissue distribution, highly expressed in roots and at lower levels in leaves, stems and siliques.

The protein localises to the vacuole. Its subcellular location is the secreted. The protein resides in the extracellular space. It localises to the cell wall. It carries out the reaction (6S)-5,6,7,8-tetrahydrofolyl-(gamma-L-Glu)(n) + (n-1) H2O = (6S)-5,6,7,8-tetrahydrofolate + (n-1) L-glutamate. Functionally, cleaves the polyglutamate sidechains of folate polyglutamates in the vacuole. Is important for polyglutamyl tail length determination before vacuolar exit. Plays a role in folate stability and intracellular folate content. This Arabidopsis thaliana (Mouse-ear cress) protein is Gamma-glutamyl hydrolase 1 (GGH1).